A 598-amino-acid chain; its full sequence is UvrABC system protein C (598 aa).

Residues 14–91 (DSPGCYLHKD…IQKNMPKYNI (78 aa)) form the GIY-YIG domain. One can recognise a UVR domain in the interval 196-231 (DKIIEDLRSKMLAASEEMAFERAAEYRDLISGIATM).

Belongs to the UvrC family. As to quaternary structure, interacts with UvrB in an incision complex.

It is found in the cytoplasm. Its function is as follows. The UvrABC repair system catalyzes the recognition and processing of DNA lesions. UvrC both incises the 5' and 3' sides of the lesion. The N-terminal half is responsible for the 3' incision and the C-terminal half is responsible for the 5' incision. The polypeptide is UvrABC system protein C (Streptococcus pyogenes serotype M12 (strain MGAS2096)).